A 275-amino-acid chain; its full sequence is MAIVKVKPTSPGRRAMVKVVNKDLHQGKPHAALLDTQSSTAGRNNNGRITTRHKGGGHKHHYRIVDFRRTKDGIPAKVERLEYDPNRSANIALVLYADGERRYIIAPKGLTVGQQLMSGSEAPIRAGNTLPIRNIPVGTTIHCIEMLPGKGAQMARSAGTSAMLLAREGVYAQVRLRSGEIRRVHIECRATIGEVGNEEHSLRQIGKAGANRWRGIRPTVRGVAMNPVDHPHGGGEGKTAAGRDPVSPWGTPTKGYRTRSNKRTTTMIVQRRHKR.

The segment covering 36–49 (TQSSTAGRNNNGRI) has biased composition (polar residues). Disordered regions lie at residues 36-59 (TQSS…GGHK) and 224-275 (AMNP…RHKR). Residues 50-59 (TTRHKGGGHK) show a composition bias toward basic residues.

This sequence belongs to the universal ribosomal protein uL2 family. In terms of assembly, part of the 50S ribosomal subunit. Forms a bridge to the 30S subunit in the 70S ribosome.

One of the primary rRNA binding proteins. Required for association of the 30S and 50S subunits to form the 70S ribosome, for tRNA binding and peptide bond formation. It has been suggested to have peptidyltransferase activity; this is somewhat controversial. Makes several contacts with the 16S rRNA in the 70S ribosome. The sequence is that of Large ribosomal subunit protein uL2 from Burkholderia vietnamiensis (strain G4 / LMG 22486) (Burkholderia cepacia (strain R1808)).